Consider the following 469-residue polypeptide: Flap endonuclease 1-B (469 aa).

The tract at residues 1-103 (MGIKGLTGLL…GVLSKRLERR (103 aa)) is N-domain. A Mg(2+)-binding site is contributed by aspartate 32. Arginine 45 and arginine 69 together coordinate DNA. 5 residues coordinate Mg(2+): aspartate 85, glutamate 157, glutamate 159, aspartate 183, and aspartate 185. The I-domain stretch occupies residues 121–257 (DVDRFSRRTV…KSALKLIREY (137 aa)). A DNA-binding site is contributed by glutamate 157. DNA-binding residues include glycine 235 and aspartate 237. Aspartate 237 serves as a coordination point for Mg(2+). The tract at residues 274–354 (QKAAQAAVES…GGMQIPEEWP (81 aa)) is disordered. Composition is skewed to acidic residues over residues 282 to 295 (ESDE…EDEP) and 302 to 317 (EMPD…EEEA). A compositionally biased stretch (basic residues) spans 326–342 (PKKKKASSKTKEKRKGK). The interaction with PCNA stretch occupies residues 412 to 420 (QQGRLDGFF). A disordered region spans residues 424–469 (PKEKAAAPAPVGKAKGKGKIDAKAKGTKRKVDEKAESSAGKKPRKK). A compositionally biased stretch (basic and acidic residues) spans 441-459 (GKIDAKAKGTKRKVDEKAE).

Belongs to the XPG/RAD2 endonuclease family. FEN1 subfamily. In terms of assembly, interacts with PCNA. Three molecules of FEN1 bind to one PCNA trimer with each molecule binding to one PCNA monomer. PCNA stimulates the nuclease activity without altering cleavage specificity. Mg(2+) serves as cofactor. In terms of processing, phosphorylated. Phosphorylation upon DNA damage induces relocalization to the nuclear plasma.

It is found in the nucleus. It localises to the nucleolus. Its subcellular location is the nucleoplasm. The protein localises to the mitochondrion. Its function is as follows. Structure-specific nuclease with 5'-flap endonuclease and 5'-3' exonuclease activities involved in DNA replication and repair. During DNA replication, cleaves the 5'-overhanging flap structure that is generated by displacement synthesis when DNA polymerase encounters the 5'-end of a downstream Okazaki fragment. It enters the flap from the 5'-end and then tracks to cleave the flap base, leaving a nick for ligation. Also involved in the long patch base excision repair (LP-BER) pathway, by cleaving within the apurinic/apyrimidinic (AP) site-terminated flap. Acts as a genome stabilization factor that prevents flaps from equilibrating into structures that lead to duplications and deletions. Also possesses 5'-3' exonuclease activity on nicked or gapped double-stranded DNA, and exhibits RNase H activity. Also involved in replication and repair of rDNA and in repairing mitochondrial DNA. This chain is Flap endonuclease 1-B, found in Laccaria bicolor (strain S238N-H82 / ATCC MYA-4686) (Bicoloured deceiver).